The sequence spans 628 residues: Chaperone protein HtpG (628 aa).

The a; substrate-binding stretch occupies residues 1–340; the sequence is MKGQETRGFQ…SNDLPLNVSR (340 aa). The segment at 341-556 is b; sequence EILQDSRVTQ…ADDMTTQMAK (216 aa). Residues 557-628 are c; that stretch reads LFAAAGQAAP…IRRMNQLLNA (72 aa).

It belongs to the heat shock protein 90 family. In terms of assembly, homodimer.

Its subcellular location is the cytoplasm. Functionally, molecular chaperone. Has ATPase activity. The chain is Chaperone protein HtpG from Sodalis glossinidius (strain morsitans).